The chain runs to 351 residues: Cyanuric acid amidohydrolase (351 aa).

The interval 1–96 (MPSLRAHVFR…HWTVFARETV (96 aa)) is RU A. Residues arginine 53 and 77–78 (SG) each bind substrate. Residues 103 to 240 (ALAIGVSRTP…HEIIVLGMSA (138 aa)) are RU B. Lysine 153 is a catalytic residue. Substrate contacts are provided by residues arginine 185 and 223–224 (SS). The Nucleophile role is filled by serine 223. Residues 246–351 (LSIDHAVMRD…PVAIIVEKEQ (106 aa)) form an RU C region. Glutamate 283 contacts Mg(2+). Substrate-binding positions include arginine 310 and 329–330 (SG). Residues alanine 332, glutamine 335, glycine 336, proline 337, and glycine 340 each coordinate Mg(2+).

It belongs to the cyclic amide hydrolase (CyAH) family. In terms of assembly, homotetramer.

It carries out the reaction cyanurate + H2O = 1-carboxybiuret + H(+). The protein operates within xenobiotic degradation; atrazine degradation; biuret from cyanurate: step 1/1. Inhibited by barbituric acid. Responsible for the hydrolysis of cyanuric acid, an intermediate formed during catabolism of s-triazine based compounds in herbicides such as atrazine and polymers such as melamine. Catalyzes the hydrolytic opening of the s-triazine ring of cyanuric acid (2,4,6-trihydroxy-s-triazine) to yield carbon dioxide and carboxybiuret, which spontaneously decarboxylates to biuret. The polypeptide is Cyanuric acid amidohydrolase (Rhizobium johnstonii (strain DSM 114642 / LMG 32736 / 3841) (Rhizobium leguminosarum bv. viciae)).